The chain runs to 105 residues: Nucleoid-associated protein SaurJH1_0513 (105 aa).

The interval 1–33 (MRGGGNMQQMMKQMQKMQKKMAQEQKKLKEERI) is disordered. A compositionally biased stretch (low complexity) spans 7–16 (MQQMMKQMQK). Positions 21-33 (MAQEQKKLKEERI) are enriched in basic and acidic residues.

It belongs to the YbaB/EbfC family. As to quaternary structure, homodimer.

Its subcellular location is the cytoplasm. The protein localises to the nucleoid. Binds to DNA and alters its conformation. May be involved in regulation of gene expression, nucleoid organization and DNA protection. This chain is Nucleoid-associated protein SaurJH1_0513, found in Staphylococcus aureus (strain JH1).